Reading from the N-terminus, the 116-residue chain is Nucleoid-associated protein SACE_0254 (116 aa).

Positions 90–116 (LQQEKMGPVTGALGGGQGLGGLGLPGL) are disordered. The segment covering 101–116 (ALGGGQGLGGLGLPGL) has biased composition (gly residues).

This sequence belongs to the YbaB/EbfC family. As to quaternary structure, homodimer.

The protein resides in the cytoplasm. It is found in the nucleoid. Binds to DNA and alters its conformation. May be involved in regulation of gene expression, nucleoid organization and DNA protection. This is Nucleoid-associated protein SACE_0254 from Saccharopolyspora erythraea (strain ATCC 11635 / DSM 40517 / JCM 4748 / NBRC 13426 / NCIMB 8594 / NRRL 2338).